The sequence spans 1019 residues: Type VI secretion system spike protein VgrG2b (1019 aa).

Positions 268–291 (AGRPFTESRLRGHRRDARVASVSG) are disordered. A Zn(2+)-binding site is contributed by His935. Residue Glu936 is part of the active site. His939 and Glu983 together coordinate Zn(2+).

Belongs to the VgrG protein family. As to quaternary structure, interacts with Tla3; this interaction promotes Tle3 loading onto VgrG2b. Interacts with host gamma-tubulin ring complex components GCP1 and GCP4. Zn(2+) is required as a cofactor.

The protein localises to the secreted. Its function is as follows. Part of the H2 type VI secretion system (H2-T6SS) specialized secretion system, which delivers several virulence factors in both prokaryotic and eukaryotic cells during infection. Forms the spike at the tip of the elongating tube probably formed by haemolysin co-regulated protein 2b/Hcp2b. Allows the delivery of the Tle3 antibacterial toxin to target cells where it exerts its toxicity. Additionally, acts directly as an effector and promotes internalization by interacting with the host gamma-tubulin ring complex. Elicits toxicity also in the bacterial periplasm and disrupts bacterial cell morphology. Toxicity is counteracted by a cognate immunity protein. This chain is Type VI secretion system spike protein VgrG2b (vgrG2b), found in Pseudomonas aeruginosa (strain ATCC 15692 / DSM 22644 / CIP 104116 / JCM 14847 / LMG 12228 / 1C / PRS 101 / PAO1).